A 247-amino-acid polypeptide reads, in one-letter code: Myeloid leukemia factor 2 (247 aa).

Residues 122–247 (ETSEMRSAPG…PSRQSRRYDW (126 aa)) form a disordered region. Positions 134 to 144 (RETRRTVRDSD) are enriched in basic and acidic residues. A compositionally biased stretch (basic residues) spans 154–169 (HHIRDRAHILQRSRNH). The span at 170-179 (RTGDQEERQD) shows a compositional bias: basic and acidic residues. The span at 182 to 192 (NLDESEAAAFD) shows a compositional bias: acidic residues. The segment covering 193–225 (DEWRRETSRYRQQRPLEFRRHEASVGGGRRAEG) has biased composition (basic and acidic residues). Phosphoserine is present on residues Ser216, Ser237, and Ser239.

The protein belongs to the MLF family.

The protein localises to the cytoplasm. The protein resides in the nucleus. The sequence is that of Myeloid leukemia factor 2 (Mlf2) from Mus musculus (Mouse).